A 621-amino-acid polypeptide reads, in one-letter code: tRNA uridine 5-carboxymethylaminomethyl modification enzyme MnmG (621 aa).

8–13 (GAGHAG) is a binding site for FAD. Position 269 to 283 (269 to 283 (GPRYCPSVEDKIFRF)) interacts with NAD(+).

The protein belongs to the MnmG family. As to quaternary structure, homodimer. Heterotetramer of two MnmE and two MnmG subunits. The cofactor is FAD.

The protein localises to the cytoplasm. In terms of biological role, NAD-binding protein involved in the addition of a carboxymethylaminomethyl (cmnm) group at the wobble position (U34) of certain tRNAs, forming tRNA-cmnm(5)s(2)U34. The sequence is that of tRNA uridine 5-carboxymethylaminomethyl modification enzyme MnmG from Chlorobium chlorochromatii (strain CaD3).